The chain runs to 263 residues: Regulatory protein RecX (263 aa).

This sequence belongs to the RecX family.

It localises to the cytoplasm. Functionally, modulates RecA activity. The polypeptide is Regulatory protein RecX (Bacillus velezensis (strain DSM 23117 / BGSC 10A6 / LMG 26770 / FZB42) (Bacillus amyloliquefaciens subsp. plantarum)).